A 552-amino-acid chain; its full sequence is Chaperonin GroEL (552 aa).

ATP-binding positions include 30–33, Lys-51, 87–91, Gly-415, 479–481, and Asp-495; these read TLGP, DGTTT, and NAA.

Belongs to the chaperonin (HSP60) family. In terms of assembly, forms a cylinder of 14 subunits composed of two heptameric rings stacked back-to-back. Interacts with the co-chaperonin GroES.

Its subcellular location is the cytoplasm. The catalysed reaction is ATP + H2O + a folded polypeptide = ADP + phosphate + an unfolded polypeptide.. Together with its co-chaperonin GroES, plays an essential role in assisting protein folding. The GroEL-GroES system forms a nano-cage that allows encapsulation of the non-native substrate proteins and provides a physical environment optimized to promote and accelerate protein folding. The protein is Chaperonin GroEL of Stutzerimonas stutzeri (Pseudomonas stutzeri).